We begin with the raw amino-acid sequence, 195 residues long: PRS fimbrial minor pilin protein (195 aa).

The signal sequence occupies residues 1 to 22; that stretch reads MRLRFSVPLFFFGCVFVHGVFA. An intrachain disulfide couples cysteine 58 to cysteine 97.

The protein belongs to the fimbrial protein family.

The protein resides in the secreted. The protein localises to the fimbrium. Its function is as follows. Fimbriae (also called pili), polar filaments radiating from the surface of the bacterium to a length of 0.5-1.5 micrometers and numbering 100-300 per cell, enable bacteria to colonize the epithelium of specific host organs. Functionally, seems to anchor the pilus to the bacterial cell. In addition the stoichiometric relationship between PrsH and PrsA determines the pilus length. The protein is PRS fimbrial minor pilin protein (prsH) of Escherichia coli.